A 448-amino-acid polypeptide reads, in one-letter code: Putative RNA-ligase (448 aa).

This sequence belongs to the asfivirus M448R family.

The protein resides in the virion. This is Putative RNA-ligase from African swine fever virus (isolate Pig/Kenya/KEN-50/1950) (ASFV).